The chain runs to 277 residues: uncharacterized protein (277 aa).

2 disordered regions span residues 1–103 (PPLR…LEDP) and 254–277 (PSPS…SPPR). The segment covering 48–65 (RRNDTGKDRGTHRQRAET) has biased composition (basic and acidic residues). Polar residues predominate over residues 66-77 (PSRSPVPTTNTV). Basic residues predominate over residues 82-91 (PAVRRQRRTQ).

This is an uncharacterized protein from Homo sapiens (Human).